Here is an 84-residue protein sequence, read N- to C-terminus: CLAVATA3/ESR (CLE)-related protein 13 (84 aa).

The N-terminal stretch at 1-29 (MGRYTTDQVQVYVLVIVLCTFFSTLQARS) is a signal peptide. The tract at residues 57 to 84 (KQVRDISGDRLSPAGPDPQHNGRSPPRK) is disordered. A hydroxyproline mark is found at Pro69 and Pro72. Pro72 carries an O-linked (Ara...) hydroxyproline glycan.

It belongs to the CLV3/ESR signal peptide family. The O-glycosylation (arabinosylation) of the hydroxyproline Pro-72 enhances binding affinity of the CLE13p peptide for its receptor. As to expression, expressed in young nodules throughout the central tissue. Expressed in the apical region of elongated nodules, corresponding to the meristematic and early infection zones.

It is found in the secreted. The protein resides in the extracellular space. Its function is as follows. Signaling peptide involved in the regulation of nodulation. Moves from root to shoot to function with the receptor kinase SUNN, in a signaling pathway that plays roles during cellular differentiation, both at the onset of nodulation, and later during nodule meristem development and subsequent homeostasis. Interacts with SUNN signaling to control nodule numbers. SUNN is involved in the autoregulation of nodulation (AON), a long distance systemic signaling from root to shoot and back again, which allows legumes to limit the number of root nodules formed based on available nitrogen and previous rhizobial colonization. This Medicago truncatula (Barrel medic) protein is CLAVATA3/ESR (CLE)-related protein 13.